The primary structure comprises 253 residues: MRKPIIAGNWKMFKTFEEAIQFVDAVQDKLPSNEKVDAVICAPALYLPTLVQVASESELAIGAQTMHYENEGAFTGEISPAQLASVDVDYVILGHSERREYYNETDEAINKKVAAALAHNIVPIICCGETLEEREAGTTEQKVAGQIKAALAGFEAQQVEHMVIAYEPIWAIGTGKTATADDANQVCGAIRSVVEELFDAATANAVRIQYGGSVKPDNVHELLSKEHIDGALVGGASLQPESYLTLLEAAANA.

N9 to K11 is a binding site for substrate. H95 serves as the catalytic Electrophile. Catalysis depends on E167, which acts as the Proton acceptor. Substrate-binding positions include G173, S213, and G234 to G235. S213 carries the post-translational modification Phosphoserine.

The protein belongs to the triosephosphate isomerase family. In terms of assembly, homodimer.

The protein localises to the cytoplasm. It catalyses the reaction D-glyceraldehyde 3-phosphate = dihydroxyacetone phosphate. Its pathway is carbohydrate biosynthesis; gluconeogenesis. It participates in carbohydrate degradation; glycolysis; D-glyceraldehyde 3-phosphate from glycerone phosphate: step 1/1. In terms of biological role, involved in the gluconeogenesis. Catalyzes stereospecifically the conversion of dihydroxyacetone phosphate (DHAP) to D-glyceraldehyde-3-phosphate (G3P). This chain is Triosephosphate isomerase, found in Lysinibacillus sphaericus (strain C3-41).